The following is a 404-amino-acid chain: Cysteine desulfurase IscS (404 aa).

Pyridoxal 5'-phosphate is bound by residues 75–76 (AT), Asn155, Gln183, and 203–205 (SAH). N6-(pyridoxal phosphate)lysine is present on Lys206. A pyridoxal 5'-phosphate-binding site is contributed by Thr243. The Cysteine persulfide intermediate role is filled by Cys328. Cys328 provides a ligand contact to [2Fe-2S] cluster.

Belongs to the class-V pyridoxal-phosphate-dependent aminotransferase family. NifS/IscS subfamily. In terms of assembly, homodimer. Forms a heterotetramer with IscU, interacts with other sulfur acceptors. It depends on pyridoxal 5'-phosphate as a cofactor.

It localises to the cytoplasm. The catalysed reaction is (sulfur carrier)-H + L-cysteine = (sulfur carrier)-SH + L-alanine. It participates in cofactor biosynthesis; iron-sulfur cluster biosynthesis. In terms of biological role, master enzyme that delivers sulfur to a number of partners involved in Fe-S cluster assembly, tRNA modification or cofactor biosynthesis. Catalyzes the removal of elemental sulfur atoms from cysteine to produce alanine. Functions as a sulfur delivery protein for Fe-S cluster synthesis onto IscU, an Fe-S scaffold assembly protein, as well as other S acceptor proteins. The chain is Cysteine desulfurase IscS from Vibrio cholerae serotype O1 (strain ATCC 39541 / Classical Ogawa 395 / O395).